The chain runs to 80 residues: Exodeoxyribonuclease 7 small subunit (80 aa).

The protein belongs to the XseB family. In terms of assembly, heterooligomer composed of large and small subunits.

It is found in the cytoplasm. The enzyme catalyses Exonucleolytic cleavage in either 5'- to 3'- or 3'- to 5'-direction to yield nucleoside 5'-phosphates.. Bidirectionally degrades single-stranded DNA into large acid-insoluble oligonucleotides, which are then degraded further into small acid-soluble oligonucleotides. The polypeptide is Exodeoxyribonuclease 7 small subunit (Maridesulfovibrio salexigens (strain ATCC 14822 / DSM 2638 / NCIMB 8403 / VKM B-1763) (Desulfovibrio salexigens)).